The sequence spans 376 residues: MYTLIKKCGNAKRGRFETPHGTIETPVFMNVGTLGVIKGAVSSMDLKEIGCQVELSNTYHLHLRPGDEVIKKMGGLHKFMNWDRPILTDSGGFQVFSLAKIRKIQEEGVYFNSHIDGRRIFMGPEESMRIQSNIASTIAMAFDECIPNPSTREYVENSVARTTRWLERCKKEMDRLNSLPDTINKKQMLFGINQGGTYEDIRKAHAKTIVDMDLDGYAIGGLAVGETHEEMYRVIDEVAPIFPDNKPLYLMGVGLPSNILEAVDRGVDFFDCVLPARNGRHGHVFTKYGKINLMNAKFELDGNPIDEGCECPACKHYSRAYIRHLFKAKEMLAMRLCVLHNLYFYNKLMEDIRKAIEGDYFKEFKEEKLHNWSGKA.

Catalysis depends on Asp-89, which acts as the Proton acceptor. Substrate is bound by residues 89–93, Asp-143, Gln-194, and Gly-221; that span reads DSGGF. Residues 252-258 form an RNA binding region; sequence GVGLPSN. Asp-271 (nucleophile) is an active-site residue. Residues 276-280 form an RNA binding; important for wobble base 34 recognition region; it reads ARNGR. Zn(2+)-binding residues include Cys-309, Cys-311, Cys-314, and His-340.

This sequence belongs to the queuine tRNA-ribosyltransferase family. As to quaternary structure, homodimer. Within each dimer, one monomer is responsible for RNA recognition and catalysis, while the other monomer binds to the replacement base PreQ1. Zn(2+) is required as a cofactor.

It catalyses the reaction 7-aminomethyl-7-carbaguanine + guanosine(34) in tRNA = 7-aminomethyl-7-carbaguanosine(34) in tRNA + guanine. It functions in the pathway tRNA modification; tRNA-queuosine biosynthesis. Catalyzes the base-exchange of a guanine (G) residue with the queuine precursor 7-aminomethyl-7-deazaguanine (PreQ1) at position 34 (anticodon wobble position) in tRNAs with GU(N) anticodons (tRNA-Asp, -Asn, -His and -Tyr). Catalysis occurs through a double-displacement mechanism. The nucleophile active site attacks the C1' of nucleotide 34 to detach the guanine base from the RNA, forming a covalent enzyme-RNA intermediate. The proton acceptor active site deprotonates the incoming PreQ1, allowing a nucleophilic attack on the C1' of the ribose to form the product. After dissociation, two additional enzymatic reactions on the tRNA convert PreQ1 to queuine (Q), resulting in the hypermodified nucleoside queuosine (7-(((4,5-cis-dihydroxy-2-cyclopenten-1-yl)amino)methyl)-7-deazaguanosine). In Clostridium tetani (strain Massachusetts / E88), this protein is Queuine tRNA-ribosyltransferase.